We begin with the raw amino-acid sequence, 290 residues long: 33 kDa chaperonin (290 aa).

Intrachain disulfides connect Cys231–Cys233 and Cys263–Cys266.

Belongs to the HSP33 family. In terms of processing, under oxidizing conditions two disulfide bonds are formed involving the reactive cysteines. Under reducing conditions zinc is bound to the reactive cysteines and the protein is inactive.

Its subcellular location is the cytoplasm. Redox regulated molecular chaperone. Protects both thermally unfolding and oxidatively damaged proteins from irreversible aggregation. Plays an important role in the bacterial defense system toward oxidative stress. The polypeptide is 33 kDa chaperonin (Thermotoga petrophila (strain ATCC BAA-488 / DSM 13995 / JCM 10881 / RKU-1)).